The primary structure comprises 291 residues: Citrate lyase subunit beta (291 aa).

Residues arginine 66 and glutamate 129 each contribute to the substrate site. 2 residues coordinate Mg(2+): glutamate 129 and aspartate 156.

It belongs to the HpcH/HpaI aldolase family. Citrate lyase beta subunit subfamily. As to quaternary structure, oligomer with a subunit composition of (alpha,beta,gamma)6. The cofactor is Mg(2+).

It localises to the cytoplasm. It catalyses the reaction citrate = oxaloacetate + acetate. It carries out the reaction (3S)-citryl-CoA = oxaloacetate + acetyl-CoA. In terms of biological role, represents a citryl-ACP lyase. This is Citrate lyase subunit beta (citE) from Haemophilus influenzae (strain ATCC 51907 / DSM 11121 / KW20 / Rd).